The sequence spans 271 residues: Proteasome inhibitor PI31 subunit (271 aa).

Residue alanine 2 is modified to N-acetylalanine. An important for homodimerization and interaction with FBXO7 region spans residues 2–150 (AGLEVLFASA…PIHEQWEKAR (149 aa)). Serine 153 and serine 189 each carry phosphoserine. Position 205 is an omega-N-methylarginine (arginine 205). Arginine 219 is modified (asymmetric dimethylarginine). A disordered region spans residues 226–271 (SGLPNRLPPGAVPPGARFDPFGPIGTSPSGPNPDHLPPPGYDDMYL). At arginine 231 the chain carries Omega-N-methylarginine. Serine 252 carries the post-translational modification Phosphoserine. A compositionally biased stretch (pro residues) spans 255–265 (GPNPDHLPPPG).

The protein belongs to the proteasome inhibitor PI31 family. In terms of assembly, monomer and homodimer. Interacts with FBXO7.

Its subcellular location is the cytoplasm. The protein resides in the endoplasmic reticulum. Plays an important role in control of proteasome function. Inhibits the hydrolysis of protein and peptide substrates by the 20S proteasome. Also inhibits the activation of the proteasome by the proteasome regulatory proteins PA700 and PA28. In Mus musculus (Mouse), this protein is Proteasome inhibitor PI31 subunit (Psmf1).